A 144-amino-acid polypeptide reads, in one-letter code: D-aminoacyl-tRNA deacylase (144 aa).

The Gly-cisPro motif, important for rejection of L-amino acids signature appears at 136-137 (GP).

The protein belongs to the DTD family. As to quaternary structure, homodimer.

It is found in the cytoplasm. The catalysed reaction is glycyl-tRNA(Ala) + H2O = tRNA(Ala) + glycine + H(+). It catalyses the reaction a D-aminoacyl-tRNA + H2O = a tRNA + a D-alpha-amino acid + H(+). Its function is as follows. An aminoacyl-tRNA editing enzyme that deacylates mischarged D-aminoacyl-tRNAs. Also deacylates mischarged glycyl-tRNA(Ala), protecting cells against glycine mischarging by AlaRS. Acts via tRNA-based rather than protein-based catalysis; rejects L-amino acids rather than detecting D-amino acids in the active site. By recycling D-aminoacyl-tRNA to D-amino acids and free tRNA molecules, this enzyme counteracts the toxicity associated with the formation of D-aminoacyl-tRNA entities in vivo and helps enforce protein L-homochirality. The polypeptide is D-aminoacyl-tRNA deacylase (Histophilus somni (strain 129Pt) (Haemophilus somnus)).